A 281-amino-acid polypeptide reads, in one-letter code: L-ornithine N(alpha)-acyltransferase (281 aa).

It belongs to the acetyltransferase family. OlsB subfamily.

It carries out the reaction a (3R)-hydroxyacyl-[ACP] + L-ornithine = a lyso-ornithine lipid + holo-[ACP] + H(+). It participates in lipid metabolism. Catalyzes the first step in the biosynthesis of ornithine lipids, which are phosphorus-free membrane lipids. Catalyzes the 3-hydroxyacyl-acyl carrier protein-dependent acylation of ornithine to form lyso-ornithine lipid (LOL). The protein is L-ornithine N(alpha)-acyltransferase of Brucella abortus (strain 2308).